The following is a 215-amino-acid chain: FMN-dependent NADH:quinone oxidoreductase 1 (215 aa).

It belongs to the azoreductase type 1 family. In terms of assembly, homodimer. FMN is required as a cofactor.

The enzyme catalyses 2 a quinone + NADH + H(+) = 2 a 1,4-benzosemiquinone + NAD(+). It catalyses the reaction N,N-dimethyl-1,4-phenylenediamine + anthranilate + 2 NAD(+) = 2-(4-dimethylaminophenyl)diazenylbenzoate + 2 NADH + 2 H(+). Its function is as follows. Quinone reductase that provides resistance to thiol-specific stress caused by electrophilic quinones. In terms of biological role, also exhibits azoreductase activity. Catalyzes the reductive cleavage of the azo bond in aromatic azo compounds to the corresponding amines. This chain is FMN-dependent NADH:quinone oxidoreductase 1, found in Lactiplantibacillus plantarum (strain ATCC BAA-793 / NCIMB 8826 / WCFS1) (Lactobacillus plantarum).